Reading from the N-terminus, the 275-residue chain is HUWE1-associated protein modifying stress responses 1 (275 aa).

The span at 32-44 shows a compositional bias: acidic residues; it reads AEQDEQLPPELQE. A disordered region spans residues 32-51; the sequence is AEQDEQLPPELQEEAAAAAQ. Positions 80 to 152 are HUWE1-binding and HAPSTR1 oligomerization (HBO) domain; the sequence is QQPGLSLWVP…LISFLCGKVP (73 aa). Disordered stretches follow at residues 155–181, 204–227, and 250–275; these read RNSR…SSVE, SVRS…RRRN, and GTRK…NRMI. Ser167 carries the phosphoserine modification. Over residues 172–181 the composition is skewed to low complexity; sequence TSTETSSSVE. Over residues 204 to 216 the composition is skewed to polar residues; it reads SVRSSTPGSPTHV. Ser212 is modified (phosphoserine).

This sequence belongs to the HAPSTR1 family. In terms of assembly, homooligomer. Heterooligomer with HAPSTR2; the interaction is direct and stabilizes HAPSTR1. Interacts with HUWE1. In terms of processing, ubiquitinated by HUWE1. Promotes HAPSTR1 degradation through polyubiquitination.

The protein localises to the nucleus. It is found in the cytoplasm. In terms of biological role, acts as a central player within a network of stress response pathways promoting cellular adaptability. The E3 ligase HUWE1 assists HAPSTR1 in controlling stress signaling and in turn, HUWE1 feeds back to promote the degradation of HAPSTR1. HAPSTR1 represents a central coordination mechanism for stress response programs. Functions as a negative regulator of TP53/P53 in the cellular response to telomere erosion and probably also DNA damage. May attenuate p53/TP53 activation through the E3 ubiquitin ligase HUWE1. The chain is HUWE1-associated protein modifying stress responses 1 from Homo sapiens (Human).